The chain runs to 189 residues: NADH-ubiquinone oxidoreductase 20.9 kDa subunit (189 aa).

A helical membrane pass occupies residues 73–88; sequence AMRLATAVGFFGGFLY.

Complex I is composed of about 40 different subunits. Post-translationally, the N-terminus is blocked.

Its subcellular location is the mitochondrion inner membrane. The catalysed reaction is a ubiquinone + NADH + 5 H(+)(in) = a ubiquinol + NAD(+) + 4 H(+)(out). Transfer of electrons from NADH to the respiratory chain. The immediate electron acceptor for the enzyme is believed to be ubiquinone. This is NADH-ubiquinone oxidoreductase 20.9 kDa subunit (nuo20.9) from Neurospora crassa (strain ATCC 24698 / 74-OR23-1A / CBS 708.71 / DSM 1257 / FGSC 987).